The sequence spans 137 residues: MNFKYIVAVSILIASAYARSEENDIQSLSQRDVLEEESLREIRGIGGALLSAAKVGLKGLAKGLAEHFANGKRTAEEREVMKRLEAAMRDLDSFEHPEEASEKETRGFNQEEKEKRIIGPVLGLVGSALGGLLKKIG.

The signal sequence occupies residues 1 to 18; that stretch reads MNFKYIVAVSILIASAYA. Asparagine 70 bears the Asparagine amide mark. The tract at residues 91–112 is disordered; that stretch reads LDSFEHPEEASEKETRGFNQEE. The residue at position 118 (isoleucine 118) is a D-allo-isoleucine. At isoleucine 136 the chain carries Isoleucine amide.

Belongs to the bombinin family. In terms of tissue distribution, expressed by the skin glands.

The protein localises to the secreted. Functionally, has antimicrobial activity, but no hemolytic activity. Preliminary evidence indicates that this peptide does not lyse and thus kill the bacteria by its antimicrobial activity. Its function is as follows. Bombinin H has antibacterial and hemolytic activity. The polypeptide is Bombinin-like peptides 1 (Bombina variegata (Yellow-bellied toad)).